The sequence spans 319 residues: NADH-ubiquinone oxidoreductase chain 1 (319 aa).

8 consecutive transmembrane segments (helical) span residues leucine 3–phenylalanine 23, leucine 74–proline 94, isoleucine 106–alanine 126, threonine 149–phenylalanine 169, alanine 175–alanine 195, leucine 226–phenylalanine 246, leucine 254–valine 274, and phenylalanine 294–glycine 314.

The protein belongs to the complex I subunit 1 family.

It localises to the mitochondrion inner membrane. It carries out the reaction a ubiquinone + NADH + 5 H(+)(in) = a ubiquinol + NAD(+) + 4 H(+)(out). In terms of biological role, core subunit of the mitochondrial membrane respiratory chain NADH dehydrogenase (Complex I) that is believed to belong to the minimal assembly required for catalysis. Complex I functions in the transfer of electrons from NADH to the respiratory chain. The immediate electron acceptor for the enzyme is believed to be ubiquinone. This chain is NADH-ubiquinone oxidoreductase chain 1 (MT-ND1), found in Polypterus ornatipinnis (Ornate bichir).